We begin with the raw amino-acid sequence, 64 residues long: Conotoxin Im11.2 (64 aa).

A signal peptide spans 1-26; the sequence is MMFRLTSVSCFLLVIVCLNLVVLTNA. 4 disulfides stabilise this stretch: Cys-27–Cys-41, Cys-34–Cys-46, Cys-40–Cys-50, and Cys-45–Cys-54. Asp-57 carries the aspartic acid 1-amide modification. The propeptide occupies 61 to 64; the sequence is ATFQ.

This sequence belongs to the conotoxin I2 superfamily. As to expression, expressed by the venom duct.

Its subcellular location is the secreted. This is Conotoxin Im11.2 from Conus imperialis (Imperial cone).